Here is a 191-residue protein sequence, read N- to C-terminus: Small ribosomal subunit protein uS5 (191 aa).

The S5 DRBM domain maps to 21-84; sequence FADRLVAINR…EQAKRQMIRV (64 aa). The segment at 155-191 is disordered; the sequence is LRKESSPRSVAQRRGKKVADILPKVDAAPAPAETAEA. Residues 181-191 are compositionally biased toward low complexity; sequence AAPAPAETAEA.

Belongs to the universal ribosomal protein uS5 family. In terms of assembly, part of the 30S ribosomal subunit. Contacts proteins S4 and S8.

In terms of biological role, with S4 and S12 plays an important role in translational accuracy. Its function is as follows. Located at the back of the 30S subunit body where it stabilizes the conformation of the head with respect to the body. This Roseobacter denitrificans (strain ATCC 33942 / OCh 114) (Erythrobacter sp. (strain OCh 114)) protein is Small ribosomal subunit protein uS5.